We begin with the raw amino-acid sequence, 445 residues long: MRCKQRVRTTELVDGFRHSAPYVNAHRGKTFVVMLGGEALAQNQFRGILNDVALLHSLGIKVVLVYGARPQIDAALAANGIEPAYHDGVRITDEDSLKVIKQVAGALQFDITARLSMSLSNTPMQGAQINLVSGNFVIAQPLGVDNGVDFCLSGKVRRIDAQGLKRQLDNHCIVLMGPIAASVTGESFNLTAEEIATQVAIKLKADKMIGFSSQNGILDRNGDVIAELMPNDAQKILNKLAEQGSACIGTMAFLKASIDACRNGVPRCHLVSYLDDGALLQELFSREGIGTQIVTESAERLRRASISDIGGILNLIRPLEEQGILVRRSREQLEIEIEQFMLIERDGLVIGCAALYPFEEDNAGEFACLVVHPDYRDADRGSLLLKNIIGQARSRGYSRLFALTTRSIHWFLEHGFVIEDVDALPQKKKQLYNYQRRSKILALDL.

The 147-residue stretch at 299–445 folds into the N-acetyltransferase domain; sequence ERLRRASISD…RRSKILALDL (147 aa).

The protein belongs to the acetyltransferase family. ArgA subfamily.

It is found in the cytoplasm. It carries out the reaction L-glutamate + acetyl-CoA = N-acetyl-L-glutamate + CoA + H(+). It functions in the pathway amino-acid biosynthesis; L-arginine biosynthesis; N(2)-acetyl-L-ornithine from L-glutamate: step 1/4. This Shewanella oneidensis (strain ATCC 700550 / JCM 31522 / CIP 106686 / LMG 19005 / NCIMB 14063 / MR-1) protein is Amino-acid acetyltransferase (argA).